The following is a 150-amino-acid chain: 3-dehydroquinate dehydratase (150 aa).

Catalysis depends on Tyr-25, which acts as the Proton acceptor. Substrate is bound by residues Asn-76, His-82, and Asp-89. The Proton donor role is filled by His-102. Residues 103 to 104 and Arg-113 each bind substrate; that span reads LS.

Belongs to the type-II 3-dehydroquinase family. In terms of assembly, homododecamer.

The catalysed reaction is 3-dehydroquinate = 3-dehydroshikimate + H2O. It functions in the pathway metabolic intermediate biosynthesis; chorismate biosynthesis; chorismate from D-erythrose 4-phosphate and phosphoenolpyruvate: step 3/7. Catalyzes a trans-dehydration via an enolate intermediate. In Trichodesmium erythraeum (strain IMS101), this protein is 3-dehydroquinate dehydratase.